The sequence spans 138 residues: MRHGYRGRRFNRTTEHRKAMFANMSAALIKHEQIVTTLPKAKDLRPVIEKLISLGRTDSIHARRLAMAQIRDADMVKKLFSVLGPRYQSRPGGYCRIMKAGFRYGDNAPMAVIEFVDRDVDARGKDSGPTSVETAEAA.

Belongs to the bacterial ribosomal protein bL17 family. Part of the 50S ribosomal subunit. Contacts protein L32.

The polypeptide is Large ribosomal subunit protein bL17 (Methylorubrum extorquens (strain PA1) (Methylobacterium extorquens)).